Consider the following 45-residue polypeptide: Somatoliberin (45 aa).

This sequence belongs to the glucagon family.

The protein localises to the secreted. GRF is released by the hypothalamus and acts on the adenohypophyse to stimulate the secretion of growth hormone. This chain is Somatoliberin (ghrh), found in Cyprinus carpio (Common carp).